We begin with the raw amino-acid sequence, 99 residues long: Orphan antixoxin protein TacA (99 aa).

Belongs to the TacA antitoxin family.

Functionally, putative antitoxin component of a toxin-antitoxin (TA) system; its cognate toxin (usually a tRNA acetylase) is unknown. The sequence is that of Orphan antixoxin protein TacA from Haemophilus influenzae (strain ATCC 51907 / DSM 11121 / KW20 / Rd).